The primary structure comprises 446 residues: GTPase Der (446 aa).

EngA-type G domains follow at residues 3–167 (PVLA…AFDE) and 180–353 (IRLA…ASAT). Residues 9–16 (GRPNVGKS), 56–60 (DTGGF), 119–122 (NKAE), 186–193 (GRPNVGKS), 233–237 (DTAGL), and 298–301 (NKWD) contribute to the GTP site. One can recognise a KH-like domain in the interval 354–438 (KKLATPVLTR…PMRIEMKSSR (85 aa)).

It belongs to the TRAFAC class TrmE-Era-EngA-EngB-Septin-like GTPase superfamily. EngA (Der) GTPase family. Associates with the 50S ribosomal subunit.

In terms of biological role, GTPase that plays an essential role in the late steps of ribosome biogenesis. In Methylibium petroleiphilum (strain ATCC BAA-1232 / LMG 22953 / PM1), this protein is GTPase Der.